The sequence spans 386 residues: MNIHEYQAKEILRSYGVSVPNGRVAFTVDEAVEAAKALGTSVCVVKAQIHAGGRGKAGGVKVAKSLEEVRTYASELLGKVLVTHQTGPEGKEVKRLLIEEGCDIQKEYYIGLVVDRATSRVVLMGSEEGGTEIEEVAAKTPEKIFKEYVDPAVGLQAFQARRLAFNINIPKKLVNQAVKFMMGLYQVFVDKDCSIAEINPLVVTGDGKVMALDAKLNFDSNALYRHPDIMEYRDLDEEDPKEVEASKYDLNYIALDGNIGCMVNGAGLAMATMDIIKYYGGEPANFLDVGGGASEEKVTEAFKIILSDPNVKGIFVNIFGGIMKCDVIASGIVAATKQVGLTLPLVVRLEGTNVELGKKILQESGLNITAAESMADGAQKIVELVR.

Positions 9–244 (KEILRSYGVS…LDEEDPKEVE (236 aa)) constitute an ATP-grasp domain. Residues Lys46, 53 to 55 (GRG), Glu99, Cys102, and Glu107 each bind ATP. 2 residues coordinate Mg(2+): Asn199 and Asp213. Substrate contacts are provided by residues Asn264 and 321-323 (GIM).

The protein belongs to the succinate/malate CoA ligase beta subunit family. As to quaternary structure, heterotetramer of two alpha and two beta subunits. Mg(2+) is required as a cofactor.

It carries out the reaction succinate + ATP + CoA = succinyl-CoA + ADP + phosphate. The enzyme catalyses GTP + succinate + CoA = succinyl-CoA + GDP + phosphate. It functions in the pathway carbohydrate metabolism; tricarboxylic acid cycle; succinate from succinyl-CoA (ligase route): step 1/1. Its function is as follows. Succinyl-CoA synthetase functions in the citric acid cycle (TCA), coupling the hydrolysis of succinyl-CoA to the synthesis of either ATP or GTP and thus represents the only step of substrate-level phosphorylation in the TCA. The beta subunit provides nucleotide specificity of the enzyme and binds the substrate succinate, while the binding sites for coenzyme A and phosphate are found in the alpha subunit. In Geobacillus thermodenitrificans (strain NG80-2), this protein is Succinate--CoA ligase [ADP-forming] subunit beta.